The chain runs to 203 residues: MATYAAFKHVELYNVGKAKKRVLRAPGGVSSDIFGSEQPQTPRNVKNLMASNIFSADTDAAQKNNVRQGAHRFYYIGETPRRGQKPVDSYSRLFGEPARPITPSKNHMKSNIPFGQNPNTAPLISKGNYNGKSGSVSSASSSVSSSTENLKINGGVRSEGNPVTGEGYKAGGTDYIQPAHLNGGSQVINKNRVPPGGYSSGLW.

Ser30 carries the phosphoserine modification. Phosphothreonine occurs at positions 41 and 102. Residues 123 to 132 are compositionally biased toward polar residues; it reads LISKGNYNGK. 2 disordered regions span residues 123-163 and 182-203; these read LISK…GNPV and NGGSQVINKNRVPPGGYSSGLW. Residues 133–146 show a composition bias toward low complexity; it reads SGSVSSASSSVSSS. Ser135 and Ser146 each carry phosphoserine.

The protein belongs to the MAP Jupiter family.

The protein localises to the nucleus. Its subcellular location is the cytoplasm. The protein resides in the cytoskeleton. It is found in the spindle. In terms of biological role, binds to all microtubule populations. This is Microtubule-associated protein Jupiter from Drosophila mojavensis (Fruit fly).